Here is a 276-residue protein sequence, read N- to C-terminus: Malectin-B (276 aa).

An N-terminal signal peptide occupies residues 1–26 (MLSIRTVLGPLAAILLTVIGPFGAHG). Residues 27–253 (SGLADKVMWA…TPNPYASDNS (227 aa)) are Lumenal-facing. 5 residues coordinate a carbohydrate: Tyr67, Tyr89, Tyr116, Phe117, and Asp186. Residues 202–249 (DVPQLQPHPGLEKKEEEEEEEEEEGSPSKKQSNKNRVQSGPRTPNPYA) are disordered. Residues 216–226 (EEEEEEEEEEG) are compositionally biased toward acidic residues. A compositionally biased stretch (polar residues) spans 229-249 (SKKQSNKNRVQSGPRTPNPYA). An N-linked (GlcNAc...) asparagine glycan is attached at Asn252. A helical membrane pass occupies residues 254–274 (SLMFPILVAFGVFIPTLFCLC). Residues 275 to 276 (RL) lie on the Cytoplasmic side of the membrane.

The protein belongs to the malectin family.

It localises to the endoplasmic reticulum membrane. Its function is as follows. Carbohydrate-binding protein with a strong ligand preference for Glc2-N-glycan. May play a role in the early steps of protein N-glycosylation. Can bind di- or higher oligomers but not monomers of glucose, including maltose, maltotriose, maltotetraose, maltoheptaose, nigerose, kojibose, cellobiose and isomaltose, although based on their subcellular locations, these are unlikely to all be physiological ligands. In Xenopus laevis (African clawed frog), this protein is Malectin-B.